Consider the following 198-residue polypeptide: Ribonuclease HII (198 aa).

The region spanning 11–198 (ELIAGVDEVG…SPVRKLLENE (188 aa)) is the RNase H type-2 domain. 3 residues coordinate a divalent metal cation: Asp17, Glu18, and Asp109.

This sequence belongs to the RNase HII family. It depends on Mn(2+) as a cofactor. Mg(2+) is required as a cofactor.

The protein localises to the cytoplasm. The enzyme catalyses Endonucleolytic cleavage to 5'-phosphomonoester.. Its function is as follows. Endonuclease that specifically degrades the RNA of RNA-DNA hybrids. This is Ribonuclease HII from Mannheimia succiniciproducens (strain KCTC 0769BP / MBEL55E).